An 868-amino-acid polypeptide reads, in one-letter code: Muscle, skeletal receptor tyrosine protein kinase (868 aa).

The first 21 residues, Met1–Thr21, serve as a signal peptide directing secretion. Topologically, residues Glu22–Thr494 are extracellular. Ig-like domains follow at residues Pro28–Gln116, Pro121–Lys205, and Ala212–Ser302. 3 disulfides stabilise this stretch: Cys49–Cys99, Cys98–Cys112, and Cys142–Cys190. Asn222 is a glycosylation site (N-linked (GlcNAc...) asparagine). Cystine bridges form between Cys233/Cys282, Cys317/Cys382, Cys325/Cys375, Cys366/Cys406, Cys394/Cys447, and Cys398/Cys434. The FZ domain maps to Glu312–Leu450. Residue Asn338 is glycosylated (N-linked (GlcNAc...) asparagine). Asn459 carries an N-linked (GlcNAc...) asparagine glycan. A helical membrane pass occupies residues Val495–Tyr515. Over Cys516–Val868 the chain is Cytoplasmic. Tyr553 carries the post-translational modification Phosphotyrosine; by autocatalysis. The Protein kinase domain maps to Ile574–Leu855. Residues Ile580–Val588 and Lys608 contribute to the ATP site. 2 positions are modified to phosphoserine; by CK2: Ser680 and Ser697. Residue Asp724 is the Proton acceptor of the active site. A Phosphotyrosine; by autocatalysis modification is found at Tyr754.

It belongs to the protein kinase superfamily. Tyr protein kinase family. In terms of assembly, monomer. Homodimer. Interacts with LRP4; the heterodimer forms an AGRIN receptor complex that binds AGRIN resulting in activation of MUSK. Forms a heterotetramer composed of 2 DOK7 and 2 MUSK molecules which facilitates MUSK trans-autophosphorylation on tyrosine residue and activation. Interacts (via cytoplasmic part) with DOK7 (via IRS-type PTB domain); requires MUSK phosphorylation. Interacts with DVL1 (via DEP domain); the interaction is direct and mediates the formation of a DVL1, MUSK and PAK1 ternary complex involved in AChR clustering. Interacts with PDZRN3; this interaction is enhanced by agrin. Interacts with FNTA; the interaction is direct and mediates AGRIN-induced phosphorylation and activation of FNTA. Interacts with CSNK2B; mediates regulation by CK2. Interacts (via the cytoplasmic domain) with DNAJA3. Interacts with NSF; may regulate MUSK endocytosis and activity. Interacts with CAV3; may regulate MUSK signaling. Interacts with RNF31. Interacts with DOK7. Mg(2+) serves as cofactor. In terms of processing, ubiquitinated by PDZRN3. Ubiquitination promotes endocytosis and lysosomal degradation. Phosphorylated. Phosphorylation is induced by AGRIN in a LRP4-dependent manner. Autophosphorylated. Autophosphorylation at Tyr-553 is required for interaction with DOK7 which in turn stimulates the phosphorylation and the activation of MUSK. Post-translationally, neddylated. As to expression, muscle specific.

The protein resides in the postsynaptic cell membrane. The enzyme catalyses L-tyrosyl-[protein] + ATP = O-phospho-L-tyrosyl-[protein] + ADP + H(+). With respect to regulation, positively regulated by CK2. Functionally, receptor tyrosine kinase which plays a central role in the formation and the maintenance of the neuromuscular junction (NMJ), the synapse between the motor neuron and the skeletal muscle. Recruitment of AGRIN by LRP4 to the MUSK signaling complex induces phosphorylation and activation of MUSK, the kinase of the complex. The activation of MUSK in myotubes regulates the formation of NMJs through the regulation of different processes including the specific expression of genes in subsynaptic nuclei, the reorganization of the actin cytoskeleton and the clustering of the acetylcholine receptors (AChR) in the postsynaptic membrane. May regulate AChR phosphorylation and clustering through activation of ABL1 and Src family kinases which in turn regulate MUSK. DVL1 and PAK1 that form a ternary complex with MUSK are also important for MUSK-dependent regulation of AChR clustering. May positively regulate Rho family GTPases through FNTA. Mediates the phosphorylation of FNTA which promotes prenylation, recruitment to membranes and activation of RAC1 a regulator of the actin cytoskeleton and of gene expression. Other effectors of the MUSK signaling include DNAJA3 which functions downstream of MUSK. May also play a role within the central nervous system by mediating cholinergic responses, synaptic plasticity and memory formation. This is Muscle, skeletal receptor tyrosine protein kinase (Musk) from Rattus norvegicus (Rat).